A 302-amino-acid chain; its full sequence is Homoserine O-acetyltransferase 1 (302 aa).

The active-site Acyl-thioester intermediate is the cysteine 142. Substrate contacts are provided by lysine 163 and serine 192. The Proton acceptor role is filled by histidine 235. Residue glutamate 237 is part of the active site. Arginine 249 contacts substrate.

The protein belongs to the MetA family.

The protein localises to the cytoplasm. It catalyses the reaction L-homoserine + acetyl-CoA = O-acetyl-L-homoserine + CoA. The protein operates within amino-acid biosynthesis; L-methionine biosynthesis via de novo pathway; O-acetyl-L-homoserine from L-homoserine: step 1/1. Its function is as follows. Transfers an acetyl group from acetyl-CoA to L-homoserine, forming acetyl-L-homoserine. The chain is Homoserine O-acetyltransferase 1 from Ilyobacter polytropus (strain ATCC 51220 / DSM 2926 / LMG 16218 / CuHBu1).